Here is a 233-residue protein sequence, read N- to C-terminus: uncharacterized protein (233 aa).

6 consecutive transmembrane segments (helical) span residues V7–Y27, Y36–P56, M62–A82, L119–M139, P159–V179, and I188–I208.

It is found in the cell membrane. This is an uncharacterized protein from Methanocaldococcus jannaschii (strain ATCC 43067 / DSM 2661 / JAL-1 / JCM 10045 / NBRC 100440) (Methanococcus jannaschii).